Consider the following 372-residue polypeptide: Pyruvylated Gal-beta-1,3-epitope synthesis protein 5 (372 aa).

Topologically, residues 1 to 12 (MGLPLRIFAGNG) are cytoplasmic. Residues 13-35 (IGGWCLRLFLFGSLILLLRPLIF) form a helical; Signal-anchor for type II membrane protein membrane-spanning segment. Residues 36–372 (YSNTTMKKLK…LRIIEQWKQL (337 aa)) are Lumenal-facing. Asn38 and Asn128 each carry an N-linked (GlcNAc...) asparagine glycan.

It is found in the golgi apparatus membrane. Its function is as follows. Involved in cell wall biogenesis. Has a role in the addition of Gal-beta1,3 moeities to galactomannans and their subsequent pyruvylation. Has a role in meiosis. This chain is Pyruvylated Gal-beta-1,3-epitope synthesis protein 5 (pvg5), found in Schizosaccharomyces pombe (strain 972 / ATCC 24843) (Fission yeast).